The following is a 246-amino-acid chain: uncharacterized protein (246 aa).

Positions 204–243 (TTKLKKLEKEIHELPYMLINGKITYEEYKKRIREIEKEIG) form a coiled coil.

This is an uncharacterized protein from Aquifex aeolicus (strain VF5).